Consider the following 234-residue polypeptide: Triggering receptor expressed on myeloid cells 1 (234 aa).

Positions 1–20 are cleaved as a signal peptide; the sequence is MRKTRLWGLLWMLFVSELRA. The Extracellular portion of the chain corresponds to 21–205; it reads ATKLTEEKYE…TDIIRVPVFN (185 aa). An Ig-like V-type domain is found at 26–134; sequence EEKYELKEGQ…LFDRIRLVVT (109 aa). Cys-41 and Cys-113 are disulfide-bonded. Asn-146, Asn-191, and Asn-194 each carry an N-linked (GlcNAc...) asparagine glycan. The helical transmembrane segment at 206–226 threads the bilayer; sequence IVILLAGGFLSKSLVFSVLFA. At 227–234 the chain is on the cytoplasmic side; it reads VTLRSFVP.

As to quaternary structure, monomer. Homomultimer; when activated. Interacts with TYROBP/DAP12. Interacts with TLR4. Glycosylated. In terms of tissue distribution, mostly expressed by immune cells of the myeloid lineage, such as monocytes, macrophages, neutrophils and dendritic cells. Expression is associated with a mature stage of myeloid development. Highly expressed in adult liver, lung and spleen than in corresponding fetal tissue. Also expressed in the lymph node, placenta, spinal cord and heart tissues. Isoform 2 was detected in the lung, liver and mature monocytes.

The protein localises to the cell membrane. The protein resides in the secreted. Cell surface receptor that plays important roles in innate and adaptive immunity by amplifying inflammatory responses. Upon activation by various ligands such as PGLYRP1, HMGB1 or HSP70, multimerizes and forms a complex with transmembrane adapter TYROBP/DAP12. In turn, initiates a SYK-mediated cascade of tyrosine phosphorylation, activating multiple downstream mediators such as BTK, MAPK1, MAPK3 or phospholipase C-gamma. This cascade promotes the neutrophil- and macrophage-mediated release of pro-inflammatory cytokines and/or chemokines, as well as their migration and thereby amplifies inflammatory responses that are triggered by bacterial and fungal infections. By also promoting the amplification of inflammatory signals that are initially triggered by Toll-like receptor (TLR) and NOD-like receptor engagement, plays a major role in the pathophysiology of acute and chronic inflammatory diseases of different etiologies including septic shock and atherosclerosis. In terms of biological role, acts as a decoy receptor, counterbalancing TREM1 pro-inflammatory activity through the neutralization of its ligand. The protein is Triggering receptor expressed on myeloid cells 1 (TREM1) of Homo sapiens (Human).